The sequence spans 118 residues: V-type proton ATPase subunit G 2 (118 aa).

The segment at 23-90 is disordered; that stretch reads ADARKRKARR…VQGMQSSQQR (68 aa). Residues 35 to 55 show a composition bias toward basic and acidic residues; it reads QAKEEAQMEVEQYRREREQEF. Polar residues-rich tracts occupy residues 56–69 and 78–89; these read QSKQQAAMGSQGNL and RRQVQGMQSSQQ.

Belongs to the V-ATPase G subunit family. In terms of assembly, V-ATPase is a heteromultimeric enzyme made up of two complexes: the ATP-hydrolytic V1 complex and the proton translocation V0 complex. The V1 complex consists of three catalytic AB heterodimers that form a heterohexamer, three peripheral stalks each consisting of EG heterodimers, one central rotor including subunits D and F, and the regulatory subunits C and H. The proton translocation complex V0 consists of the proton transport subunit a, a ring of proteolipid subunits c9c'', rotary subunit d, subunits e and f, and the accessory subunits ATP6AP1/Ac45 and ATP6AP2/PRR.

It localises to the melanosome. The protein resides in the cytoplasmic vesicle. Its subcellular location is the clathrin-coated vesicle membrane. Its function is as follows. Subunit of the V1 complex of vacuolar(H+)-ATPase (V-ATPase), a multisubunit enzyme composed of a peripheral complex (V1) that hydrolyzes ATP and a membrane integral complex (V0) that translocates protons. V-ATPase is responsible for acidifying and maintaining the pH of intracellular compartments and in some cell types, is targeted to the plasma membrane, where it is responsible for acidifying the extracellular environment. The chain is V-type proton ATPase subunit G 2 (ATP6V1G2) from Macaca mulatta (Rhesus macaque).